We begin with the raw amino-acid sequence, 419 residues long: MAPK/MAK/MRK overlapping kinase (419 aa).

In terms of domain architecture, Protein kinase spans Y4 to F285. ATP contacts are provided by residues I10–V18 and K33. D128 functions as the Proton acceptor in the catalytic mechanism. Disordered stretches follow at residues F285–A344 and P390–R419. 2 stretches are compositionally biased toward basic and acidic residues: residues K322–P338 and K393–K402.

The protein belongs to the protein kinase superfamily. CMGC Ser/Thr protein kinase family. CDC2/CDKX subfamily. The cofactor is Mg(2+). Post-translationally, autophosphorylated. As to expression, expressed in heart, brain, lung, kidney, and pancreas, and at very low levels in placenta, liver and skeletal muscle. Detected in retina.

It is found in the cytoplasm. The protein resides in the cell projection. The protein localises to the cilium. It localises to the nucleus. It catalyses the reaction L-seryl-[protein] + ATP = O-phospho-L-seryl-[protein] + ADP + H(+). The enzyme catalyses L-threonyl-[protein] + ATP = O-phospho-L-threonyl-[protein] + ADP + H(+). Its activity is regulated as follows. Phosphorylation appears to increase the enzymatic activity. In terms of biological role, able to phosphorylate several exogenous substrates and to undergo autophosphorylation. Negatively regulates cilium length in a cAMP and mTORC1 signaling-dependent manner. The sequence is that of MAPK/MAK/MRK overlapping kinase (MOK) from Homo sapiens (Human).